The sequence spans 291 residues: Protease HtpX homolog (291 aa).

2 helical membrane-spanning segments follow: residues 4 to 24 (IVLF…TMRL) and 39 to 59 (TSLL…SLAI). Histidine 145 contacts Zn(2+). Residue glutamate 146 is part of the active site. Histidine 149 contacts Zn(2+). A run of 2 helical transmembrane segments spans residues 156 to 176 (VTLA…SRII) and 195 to 215 (FFVT…IIVM). Glutamate 222 serves as a coordination point for Zn(2+).

This sequence belongs to the peptidase M48B family. Requires Zn(2+) as cofactor.

It is found in the cell inner membrane. In Thiobacillus denitrificans (strain ATCC 25259 / T1), this protein is Protease HtpX homolog.